Here is a 310-residue protein sequence, read N- to C-terminus: Alpha/beta hydrolase domain-containing protein 17A (310 aa).

Residues 38-61 (VPEPEPGPGGAGAAPSGPLRTSAA) are disordered. Catalysis depends on charge relay system residues serine 190, aspartate 255, and histidine 284. Serine 307 is modified (phosphoserine).

Belongs to the AB hydrolase superfamily. ABHD17 family. In terms of processing, palmitoylated on cysteine residues located in a cysteine cluster at the N-terminus which promotes membrane localization. Palmitoylation is required for post-synaptic localization and for depalmitoylating activity towards DLG4/PSD95. As to expression, expressed in brain (at protein level). Expressed in hippocampal neurons.

It localises to the cell membrane. It is found in the recycling endosome membrane. The protein localises to the cell projection. Its subcellular location is the dendritic spine. The protein resides in the postsynaptic density membrane. The enzyme catalyses S-hexadecanoyl-L-cysteinyl-[protein] + H2O = L-cysteinyl-[protein] + hexadecanoate + H(+). In terms of biological role, hydrolyzes fatty acids from S-acylated cysteine residues in proteins. Has depalmitoylating activity towards NRAS. Has depalmitoylating activity towards DLG4/PSD95. May have depalmitoylating activity towards MAP6. The sequence is that of Alpha/beta hydrolase domain-containing protein 17A from Rattus norvegicus (Rat).